The primary structure comprises 346 residues: Phosphoribosylformylglycinamidine cyclo-ligase (346 aa).

It belongs to the AIR synthase family.

Its subcellular location is the cytoplasm. It catalyses the reaction 2-formamido-N(1)-(5-O-phospho-beta-D-ribosyl)acetamidine + ATP = 5-amino-1-(5-phospho-beta-D-ribosyl)imidazole + ADP + phosphate + H(+). It functions in the pathway purine metabolism; IMP biosynthesis via de novo pathway; 5-amino-1-(5-phospho-D-ribosyl)imidazole from N(2)-formyl-N(1)-(5-phospho-D-ribosyl)glycinamide: step 2/2. In Aliivibrio fischeri (strain ATCC 700601 / ES114) (Vibrio fischeri), this protein is Phosphoribosylformylglycinamidine cyclo-ligase.